Reading from the N-terminus, the 56-residue chain is Ferredoxin (56 aa).

4Fe-4S ferredoxin-type domains lie at 2-28 (AYKILDTCVSCGACAAECPVDAISQGD) and 29-56 (TQFVIDADTCIDCGNCANVCPVGAPVQE). The [4Fe-4S] cluster site is built by Cys9, Cys12, Cys15, Cys19, Cys38, Cys41, Cys44, and Cys48.

The cofactor is [4Fe-4S] cluster.

In terms of biological role, ferredoxins are iron-sulfur proteins that transfer electrons in a wide variety of metabolic reactions. This is Ferredoxin (fer) from Clostridium perfringens (strain 13 / Type A).